The chain runs to 347 residues: Selenide, water dikinase (347 aa).

Cysteine 17 is a catalytic residue. Residues lysine 20 and threonine 48–aspartate 50 each bind ATP. Residue aspartate 51 participates in Mg(2+) binding. ATP is bound by residues aspartate 68, aspartate 91, and glycine 139 to serine 141. Position 91 (aspartate 91) interacts with Mg(2+). Aspartate 227 is a binding site for Mg(2+).

The protein belongs to the selenophosphate synthase 1 family. Class I subfamily. As to quaternary structure, homodimer. The cofactor is Mg(2+).

The enzyme catalyses hydrogenselenide + ATP + H2O = selenophosphate + AMP + phosphate + 2 H(+). In terms of biological role, synthesizes selenophosphate from selenide and ATP. This is Selenide, water dikinase from Cronobacter sakazakii (strain ATCC BAA-894) (Enterobacter sakazakii).